Here is a 74-residue protein sequence, read N- to C-terminus: Large ribosomal subunit protein bL31 (74 aa).

Zn(2+) is bound by residues C17, C19, C38, and C41.

This sequence belongs to the bacterial ribosomal protein bL31 family. Type A subfamily. As to quaternary structure, part of the 50S ribosomal subunit. Zn(2+) serves as cofactor.

Functionally, binds the 23S rRNA. The polypeptide is Large ribosomal subunit protein bL31 (Gloeobacter violaceus (strain ATCC 29082 / PCC 7421)).